Consider the following 540-residue polypeptide: Glucose-6-phosphate isomerase (540 aa).

The active-site Proton donor is the glutamate 350. Active-site residues include histidine 381 and lysine 503.

Belongs to the GPI family.

It is found in the cytoplasm. The catalysed reaction is alpha-D-glucose 6-phosphate = beta-D-fructose 6-phosphate. It participates in carbohydrate biosynthesis; gluconeogenesis. It functions in the pathway carbohydrate degradation; glycolysis; D-glyceraldehyde 3-phosphate and glycerone phosphate from D-glucose: step 2/4. Functionally, catalyzes the reversible isomerization of glucose-6-phosphate to fructose-6-phosphate. This chain is Glucose-6-phosphate isomerase, found in Burkholderia pseudomallei (strain 668).